The following is an 80-amino-acid chain: Exodeoxyribonuclease 7 small subunit (80 aa).

The protein belongs to the XseB family. In terms of assembly, heterooligomer composed of large and small subunits.

Its subcellular location is the cytoplasm. The catalysed reaction is Exonucleolytic cleavage in either 5'- to 3'- or 3'- to 5'-direction to yield nucleoside 5'-phosphates.. In terms of biological role, bidirectionally degrades single-stranded DNA into large acid-insoluble oligonucleotides, which are then degraded further into small acid-soluble oligonucleotides. This Vibrio atlanticus (strain LGP32) (Vibrio splendidus (strain Mel32)) protein is Exodeoxyribonuclease 7 small subunit.